Here is a 78-residue protein sequence, read N- to C-terminus: Acyl carrier protein (78 aa).

One can recognise a Carrier domain in the interval 2 to 77 (SSIEERVKKI…LAIDYINANL (76 aa)). Ser-37 carries the post-translational modification O-(pantetheine 4'-phosphoryl)serine.

Belongs to the acyl carrier protein (ACP) family. In terms of processing, 4'-phosphopantetheine is transferred from CoA to a specific serine of apo-ACP by AcpS. This modification is essential for activity because fatty acids are bound in thioester linkage to the sulfhydryl of the prosthetic group.

The protein resides in the cytoplasm. Its pathway is lipid metabolism; fatty acid biosynthesis. In terms of biological role, carrier of the growing fatty acid chain in fatty acid biosynthesis. This chain is Acyl carrier protein, found in Cellvibrio japonicus (strain Ueda107) (Pseudomonas fluorescens subsp. cellulosa).